Reading from the N-terminus, the 263-residue chain is 4-hydroxy-tetrahydrodipicolinate reductase (263 aa).

NAD(+)-binding positions include 7–12 and Asp33; that span reads GASGRM. Residue Arg34 participates in NADP(+) binding. Residues 96–98 and 120–123 contribute to the NAD(+) site; these read GTT and APNM. The Proton donor/acceptor role is filled by His153. Residue His154 coordinates (S)-2,3,4,5-tetrahydrodipicolinate. The active-site Proton donor is Lys157. 163–164 contacts (S)-2,3,4,5-tetrahydrodipicolinate; that stretch reads GT.

Belongs to the DapB family.

It is found in the cytoplasm. The catalysed reaction is (S)-2,3,4,5-tetrahydrodipicolinate + NAD(+) + H2O = (2S,4S)-4-hydroxy-2,3,4,5-tetrahydrodipicolinate + NADH + H(+). It catalyses the reaction (S)-2,3,4,5-tetrahydrodipicolinate + NADP(+) + H2O = (2S,4S)-4-hydroxy-2,3,4,5-tetrahydrodipicolinate + NADPH + H(+). Its pathway is amino-acid biosynthesis; L-lysine biosynthesis via DAP pathway; (S)-tetrahydrodipicolinate from L-aspartate: step 4/4. In terms of biological role, catalyzes the conversion of 4-hydroxy-tetrahydrodipicolinate (HTPA) to tetrahydrodipicolinate. This is 4-hydroxy-tetrahydrodipicolinate reductase from Ralstonia nicotianae (strain ATCC BAA-1114 / GMI1000) (Ralstonia solanacearum).